A 60-amino-acid chain; its full sequence is Large ribosomal subunit protein uL30 (60 aa).

It belongs to the universal ribosomal protein uL30 family. As to quaternary structure, part of the 50S ribosomal subunit.

This Salinispora arenicola (strain CNS-205) protein is Large ribosomal subunit protein uL30.